Here is a 252-residue protein sequence, read N- to C-terminus: Short-chain dehydrogenase/reductase eriH (252 aa).

Positions 16, 65, 92, 125, 158, 162, 191, and 193 each coordinate NADP(+). The active-site Proton acceptor is Y158. Y158 serves as the catalytic Proton donor. The active-site Lowers pKa of active site Tyr is the K162.

It belongs to the short-chain dehydrogenases/reductases (SDR) family.

The catalysed reaction is cyathadiol + reduced [NADPH--hemoprotein reductase] + O2 = cyathatriol + oxidized [NADPH--hemoprotein reductase] + H2O + H(+). It carries out the reaction 11-O-acetylcyathatriol + A = 11-O-acetylcyathin A3 + AH2. It catalyses the reaction cyathatriol + A = cyathin A3 + AH2. Its pathway is secondary metabolite biosynthesis. Its function is as follows. Short-chain dehydrogenase/reductase; part of the gene cluster that mediates the biosynthesis of erinacines, cyathane-xylosides that show unique biological activities, including leishmanicidal activity, stimulating activity for nerve growth-factor synthesis, and agonistic activity toward the kappa opioid receptor. Within the pathway, eriH works with eriA to catalyze C-11 hydroxylation of cyathadiol to produce cyathatriol. EriH also catalyzes oxidation of 11-O-acetyl-cyathatriol into 1-O-acetylcyathin A3. In the absence of eriL and eriJ, the SDR eriH is able to convert cyathatriol to cyathin A3; this is likely a switching mechanism in the biosynthesis of cyathins (C-14 ketogroup)and erinacines (C-14 glycosylated group). The first step of the erinacines biosynthesis pathway is catalyzed by the geranylgeranyl diphosphate (GGPP) synthase eriE via conversion of farnesyl pyrophosphate and isopentyl pyrophosphate into geranylgeranyl pyrophosphate (GGPP). GGPP is then substrate of the diterpene cyclase eriG for the production of cyatha-3,12-diene. The cytochrome P450 monooxygenase eriI then hydroxylates cyatha-3,12-diene at C-14 of the seven-membered ring to produce erinacol, which is further hydroxylated at C-15 by the cytochrome P450 monooxygenase eriC to yield cyathadiol. The cytochrome P450 monooxygenase eriA then catalyzes C-11 hydroxylation in the presence of the short chain dehydrogenase/reductase (SDR) eriH, which leads to the production of cyathatriol. The acetyltransferase eriL converts cyathatriol into 11-O-acetyl-cyathatriol. The SDR eriH catalyzes further oxidation of 11-O-acetyl-cyathatriol into 1-O-acetylcyathin A3. Finally, the glycosyl transferase eriJ tranfers xylose from UDP-xylose onto C-14 of 11-O-acetyl-cyathatriol to form eracine Q. EriJ is also able to convert 11-O-acetyl-cyathatriol to eracine Q2 by using UDP-D-glucose as cosubstrate, but at a lower rate. The protein is Short-chain dehydrogenase/reductase eriH of Hericium erinaceus (Lion's mane mushroom).